The chain runs to 116 residues: Large ribosomal subunit protein uL18 (116 aa).

This sequence belongs to the universal ribosomal protein uL18 family. As to quaternary structure, part of the 50S ribosomal subunit; part of the 5S rRNA/L5/L18/L25 subcomplex. Contacts the 5S and 23S rRNAs.

In terms of biological role, this is one of the proteins that bind and probably mediate the attachment of the 5S RNA into the large ribosomal subunit, where it forms part of the central protuberance. The polypeptide is Large ribosomal subunit protein uL18 (Shewanella sp. (strain ANA-3)).